The chain runs to 123 residues: Small ribosomal subunit protein uS12 (123 aa).

The residue at position 89 (Asp-89) is a 3-methylthioaspartic acid.

It belongs to the universal ribosomal protein uS12 family. As to quaternary structure, part of the 30S ribosomal subunit. Contacts proteins S8 and S17. May interact with IF1 in the 30S initiation complex.

With S4 and S5 plays an important role in translational accuracy. Its function is as follows. Interacts with and stabilizes bases of the 16S rRNA that are involved in tRNA selection in the A site and with the mRNA backbone. Located at the interface of the 30S and 50S subunits, it traverses the body of the 30S subunit contacting proteins on the other side and probably holding the rRNA structure together. The combined cluster of proteins S8, S12 and S17 appears to hold together the shoulder and platform of the 30S subunit. This chain is Small ribosomal subunit protein uS12, found in Rhodopseudomonas palustris (strain BisB18).